Consider the following 530-residue polypeptide: Cytochrome P450 monooxygenase aneG (530 aa).

The N-linked (GlcNAc...) asparagine glycan is linked to Asn2. The chain crosses the membrane as a helical span at residues 43–63 (WLSILGFTIGCYYVIYTFYAL). Residue Asn92 is glycosylated (N-linked (GlcNAc...) asparagine). Cys474 lines the heme pocket.

The protein belongs to the cytochrome P450 family. Heme serves as cofactor.

Its subcellular location is the membrane. It catalyses the reaction asperaculane E + reduced [NADPH--hemoprotein reductase] + O2 = asperaculane G + oxidized [NADPH--hemoprotein reductase] + H2O + H(+). It carries out the reaction asperaculane G + reduced [NADPH--hemoprotein reductase] + O2 = aculene D + oxidized [NADPH--hemoprotein reductase] + CO2 + 2 H2O. The catalysed reaction is asperaculane E + 2 reduced [NADPH--hemoprotein reductase] + 2 O2 = aculene D + 2 oxidized [NADPH--hemoprotein reductase] + CO2 + 3 H2O + H(+). It functions in the pathway secondary metabolite biosynthesis. In terms of biological role, cytochrome P450 monooxygenase; part of the gene cluster that mediates the biosynthesis of aculenes, a unique type of norsesquiterpenes that contain a nordaucane skeleton linked to an L-proline moiety and are of mixed biosynthetic origin. The pathway begins with the synthesis of dauca-4,7-diene by the terpene cyclase aneC using farnesyl pyrophosphate (FPP) as substrate. The cytochrome P450 monooxygenase aneF then performs the initial oxidation at C-12 of dauca-4,7-diene to yield asperaculane D. Asperaculane D is substrate of the cytochrome P450 monooxygenase aneD for C-10 hydroxylation to yield asperaculane E. The cytochrome P450 monooxygenase aneG then converts asperaculane E into aculene D via C-2 oxidation. The monomodular nonribosomal peptide synthtase aneB adenylates L-proline and the thiohydrolase aneE transfers this activated L-proline derivative to aculenes D and C to produce respectively aculenes B and A. The dioxygenase aneA converts aculene D into aculene C, and aculene B into aculene A by introducing the 5,6-alkene moiety. Asperculanes A, B, C and F, as well as 14-prolyl asperculane C, might be shunt products of the pathway. This Aspergillus aculeatus (strain ATCC 16872 / CBS 172.66 / WB 5094) protein is Cytochrome P450 monooxygenase aneG.